A 303-amino-acid chain; its full sequence is Protoporphyrin uptake protein 1 (303 aa).

Over 1-18 the chain is Extracellular; it reads MSTTDSGFVLYHYTPSKA. The helical transmembrane segment at 19-39 threads the bilayer; sequence AAIVFVVLFIIMTVIFAVQTL. Topologically, residues 40–76 are cytoplasmic; the sequence is YAARKSSKALKNNPFESSDDKVDSLEDAEYKQLKITP. The chain crosses the membrane as a helical span at residues 77-97; sequence TVFAFIPFFTGCIMEAVGYIG. Residues 98-111 lie on the Extracellular side of the membrane; sequence RALSSSNPERTTPY. Residues 112–132 traverse the membrane as a helical segment; it reads IIQSVLLLVAPALIAATIYMI. The Cytoplasmic segment spans residues 133–154; that stretch reads FGRLLHVMRCQSLILISARFGT. Residues 155 to 175 form a helical membrane-spanning segment; that stretch reads TFFVVGDVFSFFLQAAGGGLM. At 176–183 the chain is on the extracellular side; the sequence is SKAGSTKT. Residues 184–204 traverse the membrane as a helical segment; the sequence is GSGLITAGLFVQVIFFGFFII. At 205-226 the chain is on the cytoplasmic side; the sequence is NEIRFTVNVKRRCLFYEDISRK. A helical membrane pass occupies residues 227 to 247; the sequence is WIFVNATLLLSSMLILLRSIV. The Extracellular portion of the chain corresponds to 248–264; that stretch reads RIVEFIQGFNGYIISHE. Residues 265-285 traverse the membrane as a helical segment; it reads YFIYVFDAVPMLLVIIAFSVG. Over 286-303 the chain is Cytoplasmic; sequence SFFGNVFDVIKECQTLSN.

This sequence belongs to the lipid-translocating exporter (LTE) (TC 9.A.26.1) family. In terms of processing, N-glycosylated.

The protein localises to the cell membrane. Involved in inducible protoporphyrin IX influx and heme efflux. In Saccharomyces cerevisiae (strain ATCC 204508 / S288c) (Baker's yeast), this protein is Protoporphyrin uptake protein 1 (PUG1).